A 318-amino-acid chain; its full sequence is Bis(5'-nucleosyl)-tetraphosphatase, symmetrical (318 aa).

Residues 269–318 are disordered; that stretch reads PGREVTGPAPVARAPRRPRERLGRQRSRGNRGNAGNTAVPAKPPVDTPQD. Positions 282–297 are enriched in basic residues; that stretch reads APRRPRERLGRQRSRG. Residues 309–318 show a composition bias toward pro residues; sequence AKPPVDTPQD.

This sequence belongs to the Ap4A hydrolase family.

It carries out the reaction P(1),P(4)-bis(5'-adenosyl) tetraphosphate + H2O = 2 ADP + 2 H(+). In terms of biological role, hydrolyzes diadenosine 5',5'''-P1,P4-tetraphosphate to yield ADP. This Xanthomonas oryzae pv. oryzae (strain MAFF 311018) protein is Bis(5'-nucleosyl)-tetraphosphatase, symmetrical.